Consider the following 327-residue polypeptide: Methionyl-tRNA formyltransferase (327 aa).

A (6S)-5,6,7,8-tetrahydrofolate-binding site is contributed by 121-124 (SLLP).

The protein belongs to the Fmt family.

It catalyses the reaction L-methionyl-tRNA(fMet) + (6R)-10-formyltetrahydrofolate = N-formyl-L-methionyl-tRNA(fMet) + (6S)-5,6,7,8-tetrahydrofolate + H(+). Attaches a formyl group to the free amino group of methionyl-tRNA(fMet). The formyl group appears to play a dual role in the initiator identity of N-formylmethionyl-tRNA by promoting its recognition by IF2 and preventing the misappropriation of this tRNA by the elongation apparatus. This is Methionyl-tRNA formyltransferase from Paraburkholderia phymatum (strain DSM 17167 / CIP 108236 / LMG 21445 / STM815) (Burkholderia phymatum).